Here is a 217-residue protein sequence, read N- to C-terminus: MAFAASTACCKPSALLAPRASSSSPPSQARLCRPSTSAAFHGLRAPASAFALAPAPRRRAASTGIVCGKVSKGSVPPNFTLKDQDGKTVSLSKFKGKPVVLYFYPADETPGCTKQACAFRDSYEKYKKAGAEVIGISGDDAASHKAFAKKYRLPFTLLSDEGNKVRKEWGVPSDLFGTLPGRQTYVLDKKGVVQYIYNNQFQPEKHIGETLKIIQNL.

Residues 1 to 66 constitute a chloroplast transit peptide; it reads MAFAASTACC…RRRAASTGIV (66 aa). The Thioredoxin domain maps to 70–217; the sequence is VSKGSVPPNF…GETLKIIQNL (148 aa). Cysteine 112 (cysteine sulfenic acid (-SOH) intermediate) is an active-site residue. Cysteine 112 and cysteine 117 are joined by a disulfide.

This sequence belongs to the peroxiredoxin family. BCP/PrxQ subfamily. In terms of assembly, monomer.

It localises to the plastid. It is found in the chloroplast thylakoid lumen. It catalyses the reaction a hydroperoxide + [thioredoxin]-dithiol = an alcohol + [thioredoxin]-disulfide + H2O. In terms of biological role, thiol-specific peroxidase that catalyzes the reduction of hydrogen peroxide and organic hydroperoxides to water and alcohols, respectively. Plays a role in cell protection against oxidative stress by detoxifying peroxides. The polypeptide is Peroxiredoxin Q, chloroplastic (PRX1) (Triticum aestivum (Wheat)).